The following is a 148-amino-acid chain: Large ribosomal subunit protein bL9 (148 aa).

The protein belongs to the bacterial ribosomal protein bL9 family.

In terms of biological role, binds to the 23S rRNA. This is Large ribosomal subunit protein bL9 from Solibacter usitatus (strain Ellin6076).